We begin with the raw amino-acid sequence, 124 residues long: Small ribosomal subunit protein uS12 (124 aa).

Residues 1 to 23 (MATINQLVRKPRKRPVAKSDVPA) are disordered. Asp-89 bears the 3-methylthioaspartic acid mark. A disordered region spans residues 101 to 124 (ALDTSGVQNRRQGRSKYGTKRPKS). The span at 111–124 (RQGRSKYGTKRPKS) shows a compositional bias: basic residues.

The protein belongs to the universal ribosomal protein uS12 family. In terms of assembly, part of the 30S ribosomal subunit. Contacts proteins S8 and S17. May interact with IF1 in the 30S initiation complex.

In terms of biological role, with S4 and S5 plays an important role in translational accuracy. Functionally, interacts with and stabilizes bases of the 16S rRNA that are involved in tRNA selection in the A site and with the mRNA backbone. Located at the interface of the 30S and 50S subunits, it traverses the body of the 30S subunit contacting proteins on the other side and probably holding the rRNA structure together. The combined cluster of proteins S8, S12 and S17 appears to hold together the shoulder and platform of the 30S subunit. The protein is Small ribosomal subunit protein uS12 of Chromohalobacter salexigens (strain ATCC BAA-138 / DSM 3043 / CIP 106854 / NCIMB 13768 / 1H11).